The chain runs to 33 residues: Dolabellanin-B2 (33 aa).

Contains two disulfide bonds. Post-translationally, up to two of the methionines may be oxidized to methionine sulfoxides.

The protein localises to the secreted. Has antibacterial activity against Gram-negative bacteria E.coli JM109 and DH5-alpha, H.influenza IID 983, and V.vulnificus RIMD 2219009. Has antibacterial activity against Gram-positive bacteria S.aureus IID 1677, B.subtilis RIMD 0225014 and L.monocytogenes VIU206. Possesses antifungal activity against S.cerevisiae A581A, S.pombe IFO 1628, C.albicans ATCC 36232 and TIMM-1623, and C.tropicalis TIMM-0313. This is Dolabellanin-B2 from Dolabella auricularia (Shoulderblade sea cat).